The following is a 317-amino-acid chain: Putative 2-hydroxyacid dehydrogenase SERP1888 (317 aa).

Residues 155–156 (EI), 234–236 (AGR), and Asp260 each bind NAD(+). Arg236 is an active-site residue. The active site involves Glu265. Catalysis depends on His283, which acts as the Proton donor. Position 283-286 (283-286 (HIGN)) interacts with NAD(+).

This sequence belongs to the D-isomer specific 2-hydroxyacid dehydrogenase family.

This chain is Putative 2-hydroxyacid dehydrogenase SERP1888, found in Staphylococcus epidermidis (strain ATCC 35984 / DSM 28319 / BCRC 17069 / CCUG 31568 / BM 3577 / RP62A).